We begin with the raw amino-acid sequence, 152 residues long: SsrA-binding protein (152 aa).

It belongs to the SmpB family.

Its subcellular location is the cytoplasm. In terms of biological role, required for rescue of stalled ribosomes mediated by trans-translation. Binds to transfer-messenger RNA (tmRNA), required for stable association of tmRNA with ribosomes. tmRNA and SmpB together mimic tRNA shape, replacing the anticodon stem-loop with SmpB. tmRNA is encoded by the ssrA gene; the 2 termini fold to resemble tRNA(Ala) and it encodes a 'tag peptide', a short internal open reading frame. During trans-translation Ala-aminoacylated tmRNA acts like a tRNA, entering the A-site of stalled ribosomes, displacing the stalled mRNA. The ribosome then switches to translate the ORF on the tmRNA; the nascent peptide is terminated with the 'tag peptide' encoded by the tmRNA and targeted for degradation. The ribosome is freed to recommence translation, which seems to be the essential function of trans-translation. This chain is SsrA-binding protein, found in Rickettsia africae (strain ESF-5).